The chain runs to 216 residues: Imidazole glycerol phosphate synthase subunit HisH (216 aa).

The 215-residue stretch at 2–216 (SVAIVDYGSG…LISNFLKWKP (215 aa)) folds into the Glutamine amidotransferase type-1 domain. The active-site Nucleophile is C88. Active-site residues include H196 and E198.

As to quaternary structure, heterodimer of HisH and HisF.

The protein resides in the cytoplasm. The enzyme catalyses 5-[(5-phospho-1-deoxy-D-ribulos-1-ylimino)methylamino]-1-(5-phospho-beta-D-ribosyl)imidazole-4-carboxamide + L-glutamine = D-erythro-1-(imidazol-4-yl)glycerol 3-phosphate + 5-amino-1-(5-phospho-beta-D-ribosyl)imidazole-4-carboxamide + L-glutamate + H(+). It carries out the reaction L-glutamine + H2O = L-glutamate + NH4(+). The protein operates within amino-acid biosynthesis; L-histidine biosynthesis; L-histidine from 5-phospho-alpha-D-ribose 1-diphosphate: step 5/9. Functionally, IGPS catalyzes the conversion of PRFAR and glutamine to IGP, AICAR and glutamate. The HisH subunit catalyzes the hydrolysis of glutamine to glutamate and ammonia as part of the synthesis of IGP and AICAR. The resulting ammonia molecule is channeled to the active site of HisF. This Rhodopseudomonas palustris (strain ATCC BAA-98 / CGA009) protein is Imidazole glycerol phosphate synthase subunit HisH.